The sequence spans 197 residues: Serine recombinase gin (197 aa).

In terms of domain architecture, Resolvase/invertase-type recombinase catalytic spans 1-134; that stretch reads MLIGYVRVST…AGLAAARNKG (134 aa). The O-(5'-phospho-DNA)-serine intermediate role is filled by Ser9. The H-T-H motif DNA-binding region spans 138–181; sequence GRPPKLTKAEWEQAGRLLAQGIPRKQVALIYDVALSTLYKKHPA.

Belongs to the site-specific recombinase resolvase family. In terms of assembly, homodimer. During inversion, two dimers associate to form a homotetramer.

It localises to the host cytoplasm. Functionally, performs inversion of a viral segment (G-segment) that encodes two alternate pairs of tail fiber proteins thereby modifying the host specificity of the virus. Binds as a dimer to the viral gix sites which are 34-bp palindromic sequences that flank the invertible G-segment. Catalyzes site-specific recombination in the presence of the host factor Fis. Gin dimers bound to each of the gix sites and host factor Fis bound to the enhancer come together to form the synaptic complex. Each Gin monomer introduces a nick and becomes covalently attached to the 5'-phosphate of the DNA, resulting in double-stranded staggered breaks at both recombination sites. A 180 degrees rotation of one of the two Gin dimers followed by religation of the DNA leads to the inversion of the G-segment. In Escherichia coli (Bacteriophage D108), this protein is Serine recombinase gin (gin).